A 445-amino-acid chain; its full sequence is Proline--tRNA ligase (445 aa).

Belongs to the class-II aminoacyl-tRNA synthetase family. ProS type 2 subfamily. As to quaternary structure, homodimer.

It localises to the cytoplasm. It catalyses the reaction tRNA(Pro) + L-proline + ATP = L-prolyl-tRNA(Pro) + AMP + diphosphate. Functionally, catalyzes the attachment of proline to tRNA(Pro) in a two-step reaction: proline is first activated by ATP to form Pro-AMP and then transferred to the acceptor end of tRNA(Pro). The chain is Proline--tRNA ligase from Cereibacter sphaeroides (strain ATCC 17023 / DSM 158 / JCM 6121 / CCUG 31486 / LMG 2827 / NBRC 12203 / NCIMB 8253 / ATH 2.4.1.) (Rhodobacter sphaeroides).